Consider the following 779-residue polypeptide: Polyribonucleotide nucleotidyltransferase (779 aa).

Positions 490 and 496 each coordinate Mg(2+). The KH domain maps to 557–618 (PHILSLKINP…EAVKARIEAV (62 aa)). One can recognise an S1 motif domain in the interval 625–693 (GEEFEGTVVK…DRGKIDLIRP (69 aa)). The span at 699–752 (VPLREPRAPRGGDRGPRRDSDRGGDRGPRREFSDRGPRPEGARSERPEGQRTER) shows a compositional bias: basic and acidic residues. Residues 699–779 (VPLREPRAPR…AAPVFPRRED (81 aa)) are disordered. A compositionally biased stretch (polar residues) spans 757-767 (PATQESSQSSD).

It belongs to the polyribonucleotide nucleotidyltransferase family. Mg(2+) is required as a cofactor.

The protein localises to the cytoplasm. The enzyme catalyses RNA(n+1) + phosphate = RNA(n) + a ribonucleoside 5'-diphosphate. Functionally, involved in mRNA degradation. Catalyzes the phosphorolysis of single-stranded polyribonucleotides processively in the 3'- to 5'-direction. This chain is Polyribonucleotide nucleotidyltransferase, found in Deinococcus radiodurans (strain ATCC 13939 / DSM 20539 / JCM 16871 / CCUG 27074 / LMG 4051 / NBRC 15346 / NCIMB 9279 / VKM B-1422 / R1).